Reading from the N-terminus, the 249-residue chain is 5'-nucleotidase SurE (249 aa).

A divalent metal cation contacts are provided by D8, D9, S39, and N91.

The protein belongs to the SurE nucleotidase family. It depends on a divalent metal cation as a cofactor.

The protein resides in the cytoplasm. It catalyses the reaction a ribonucleoside 5'-phosphate + H2O = a ribonucleoside + phosphate. In terms of biological role, nucleotidase that shows phosphatase activity on nucleoside 5'-monophosphates. This chain is 5'-nucleotidase SurE, found in Pseudomonas putida (strain W619).